A 334-amino-acid polypeptide reads, in one-letter code: GTP 3',8-cyclase (334 aa).

Residues 11-235 (GFNRKVDYLR…VESAESSQGP (225 aa)) form the Radical SAM core domain. Arg20 contributes to the GTP binding site. Cys27 and Cys31 together coordinate [4Fe-4S] cluster. An S-adenosyl-L-methionine-binding site is contributed by Tyr33. Cys34 contributes to the [4Fe-4S] cluster binding site. Arg69 contributes to the GTP binding site. S-adenosyl-L-methionine is bound at residue Gly73. Thr100 provides a ligand contact to GTP. An S-adenosyl-L-methionine-binding site is contributed by Ser124. Lys161 contacts GTP. S-adenosyl-L-methionine is bound at residue Met195. Cys260 and Cys263 together coordinate [4Fe-4S] cluster. 265–267 (RVR) is a binding site for GTP. Residue Cys277 coordinates [4Fe-4S] cluster.

The protein belongs to the radical SAM superfamily. MoaA family. In terms of assembly, monomer and homodimer. [4Fe-4S] cluster serves as cofactor.

It catalyses the reaction GTP + AH2 + S-adenosyl-L-methionine = (8S)-3',8-cyclo-7,8-dihydroguanosine 5'-triphosphate + 5'-deoxyadenosine + L-methionine + A + H(+). It functions in the pathway cofactor biosynthesis; molybdopterin biosynthesis. Its function is as follows. Catalyzes the cyclization of GTP to (8S)-3',8-cyclo-7,8-dihydroguanosine 5'-triphosphate. The protein is GTP 3',8-cyclase of Pseudomonas entomophila (strain L48).